Consider the following 146-residue polypeptide: Oleosin (146 aa).

Position 2 is an N-acetylalanine (Ala2). The next 3 helical transmembrane spans lie at 22–42 (ILGFITLFVSGAILLLLTGLT), 56–76 (VLIFFSPILIPVATVLFVAVA), and 77–97 (GFLSAGGFGLAALSAISWLYN). The Proline-knot motif lies at 55–66 (PVLIFFSPILIP).

It belongs to the oleosin family. Expressed in pollen (at protein level).

It localises to the lipid droplet. Its subcellular location is the membrane. This chain is Oleosin, found in Pinus elliottii (Slash pine).